The following is a 324-amino-acid chain: COP9 signalosome complex subunit 6 (324 aa).

The region spanning 38-171 (VALHPLVILN…VSVFESVIDI (134 aa)) is the MPN domain.

The protein belongs to the peptidase M67A family. CSN6 subfamily. In terms of assembly, component of the CSN complex, composed of COPS1/GPS1, COPS2, COPS3, COPS4, COPS5, COPS6, COPS7 (COPS7A or COPS7B), COPS8 and COPS9. In the complex, it probably interacts directly with COPS2, COPS4, COPS5, COPS7 (COPS7A or COPS7B) and COPS9. Interacts with the translation initiation factor EIF3S6. Interacts weakly with RBX1. Directly interacts with COP1 and 14-3-3 protein sigma/SFN. Interacts with ERCC6.

It is found in the cytoplasm. The protein localises to the nucleus. Component of the COP9 signalosome complex (CSN), a complex involved in various cellular and developmental processes. The CSN complex is an essential regulator of the ubiquitin (Ubl) conjugation pathway by mediating the deneddylation of the cullin subunits of SCF-type E3 ligase complexes, leading to decrease the Ubl ligase activity of SCF-type complexes such as SCF, CSA or DDB2. The complex is also involved in phosphorylation of p53/TP53, c-jun/JUN, IkappaBalpha/NFKBIA, ITPK1 and IRF8, possibly via its association with CK2 and PKD kinases. CSN-dependent phosphorylation of TP53 and JUN promotes and protects degradation by the Ubl system, respectively. Has some glucocorticoid receptor-responsive activity. Stabilizes COP1 through reducing COP1 auto-ubiquitination and decelerating COP1 turnover rate, hence regulates the ubiquitination of COP1 targets, including SFN. This is COP9 signalosome complex subunit 6 (Cops6) from Mus musculus (Mouse).